Here is a 1162-residue protein sequence, read N- to C-terminus: Cartilage intermediate layer protein 2 (1162 aa).

Positions 1-20 (MASPLPLLYLCLAALHLAGA) are cleaved as a signal peptide. The tract at residues 23–51 (ATPTEEHTSTARGLQGRPPDTGQPSPALE) is disordered. A TSP type-1 domain is found at 146–197 (EAAWGAWGAWGLCSKSCGLGRRLRRRSCQSSSGDTCPGSPQEAQKCVRSRCP). Disulfide bonds link C158/C191, C162/C196, C173/C181, and C314/C360. The Ig-like C2-type domain maps to 293 to 377 (PYLVKHPESR…TVRSRAALLT (85 aa)). N-linked (GlcNAc...) asparagine glycosylation occurs at N330.

In terms of processing, may be cleaved into 2 chains possibly by a furin-like protease upon or preceding secretion. Post-translationally, N-glycosylated. Expressed in articulated and meniscal cartilage (at protein level). Also detected in heart, skeletal muscle and brain. Not detected in growth plate cartilage.

It is found in the secreted. The protein localises to the extracellular space. Its subcellular location is the extracellular matrix. Functionally, may play a role in cartilage scaffolding. The protein is Cartilage intermediate layer protein 2 of Mus musculus (Mouse).